We begin with the raw amino-acid sequence, 177 residues long: MSNARNKRNNKNEEQGLEAGLLDRVVKIKRCAAVVKGGRRFSFAAMVVVGNGSGQVGWGYGKANEVPPSVQKAQKQASRSMIHVPLVEGSIPHQVWGRYGAARVVLIPAGAGTGIIAGQAVRAVCEACGIHDILTKSYGTNNPVTLVKATLDAMSKLRTREQIAALRGLNPDDLIEA.

The region spanning 21 to 84 (LLDRVVKIKR…KQASRSMIHV (64 aa)) is the S5 DRBM domain.

The protein belongs to the universal ribosomal protein uS5 family. Part of the 30S ribosomal subunit. Contacts proteins S4 and S8.

In terms of biological role, with S4 and S12 plays an important role in translational accuracy. Functionally, located at the back of the 30S subunit body where it stabilizes the conformation of the head with respect to the body. This is Small ribosomal subunit protein uS5 from Rhodopirellula baltica (strain DSM 10527 / NCIMB 13988 / SH1).